Consider the following 490-residue polypeptide: ATP synthase subunit beta, chloroplastic (490 aa).

170-177 (GGAGVGKT) serves as a coordination point for ATP.

It belongs to the ATPase alpha/beta chains family. As to quaternary structure, F-type ATPases have 2 components, CF(1) - the catalytic core - and CF(0) - the membrane proton channel. CF(1) has five subunits: alpha(3), beta(3), gamma(1), delta(1), epsilon(1). CF(0) has four main subunits: a(1), b(1), b'(1) and c(9-12).

The protein resides in the plastid. The protein localises to the chloroplast thylakoid membrane. It catalyses the reaction ATP + H2O + 4 H(+)(in) = ADP + phosphate + 5 H(+)(out). Its function is as follows. Produces ATP from ADP in the presence of a proton gradient across the membrane. The catalytic sites are hosted primarily by the beta subunits. This is ATP synthase subunit beta, chloroplastic from Calystegia sepium (Hedge bindweed).